The primary structure comprises 348 residues: Holliday junction branch migration complex subunit RuvB (348 aa).

A large ATPase domain (RuvB-L) region spans residues 4-184 (ADRLIAASGR…FGIVQRLEFY (181 aa)). ATP-binding positions include Ile23, Arg24, Gly65, Lys68, Thr69, Thr70, 131-133 (EDF), Arg174, Tyr184, and Arg221. Mg(2+) is bound at residue Thr69. The segment at 185 to 255 (SDKDLATIVS…VADLALNLLD (71 aa)) is small ATPAse domain (RuvB-S). Residues 258–348 (ERGFDHSDRR…GADFSEAGDE (91 aa)) form a head domain (RuvB-H) region. DNA is bound by residues Arg294, Arg313, and Arg318.

Belongs to the RuvB family. In terms of assembly, homohexamer. Forms an RuvA(8)-RuvB(12)-Holliday junction (HJ) complex. HJ DNA is sandwiched between 2 RuvA tetramers; dsDNA enters through RuvA and exits via RuvB. An RuvB hexamer assembles on each DNA strand where it exits the tetramer. Each RuvB hexamer is contacted by two RuvA subunits (via domain III) on 2 adjacent RuvB subunits; this complex drives branch migration. In the full resolvosome a probable DNA-RuvA(4)-RuvB(12)-RuvC(2) complex forms which resolves the HJ.

The protein resides in the cytoplasm. The enzyme catalyses ATP + H2O = ADP + phosphate + H(+). Functionally, the RuvA-RuvB-RuvC complex processes Holliday junction (HJ) DNA during genetic recombination and DNA repair, while the RuvA-RuvB complex plays an important role in the rescue of blocked DNA replication forks via replication fork reversal (RFR). RuvA specifically binds to HJ cruciform DNA, conferring on it an open structure. The RuvB hexamer acts as an ATP-dependent pump, pulling dsDNA into and through the RuvAB complex. RuvB forms 2 homohexamers on either side of HJ DNA bound by 1 or 2 RuvA tetramers; 4 subunits per hexamer contact DNA at a time. Coordinated motions by a converter formed by DNA-disengaged RuvB subunits stimulates ATP hydrolysis and nucleotide exchange. Immobilization of the converter enables RuvB to convert the ATP-contained energy into a lever motion, pulling 2 nucleotides of DNA out of the RuvA tetramer per ATP hydrolyzed, thus driving DNA branch migration. The RuvB motors rotate together with the DNA substrate, which together with the progressing nucleotide cycle form the mechanistic basis for DNA recombination by continuous HJ branch migration. Branch migration allows RuvC to scan DNA until it finds its consensus sequence, where it cleaves and resolves cruciform DNA. This is Holliday junction branch migration complex subunit RuvB from Pseudomonas putida (strain W619).